The sequence spans 342 residues: Isopentenyl-diphosphate delta-isomerase (342 aa).

A substrate-binding site is contributed by 6–7; that stretch reads RK. FMN-binding positions include Ser-63, 64 to 66, Ser-94, and Asn-122; that span reads SMT. Residue 94 to 96 coordinates substrate; the sequence is SMR. Gln-157 is a substrate binding site. Glu-158 serves as a coordination point for Mg(2+). FMN-binding positions include Lys-189, Thr-219, 269–271, and 290–291; these read GLK and AG.

This sequence belongs to the IPP isomerase type 2 family. As to quaternary structure, homooctamer. Dimer of tetramers. The cofactor is FMN. It depends on NADPH as a cofactor. Mg(2+) is required as a cofactor.

It is found in the cytoplasm. It carries out the reaction isopentenyl diphosphate = dimethylallyl diphosphate. Functionally, involved in the biosynthesis of isoprenoids. Catalyzes the 1,3-allylic rearrangement of the homoallylic substrate isopentenyl (IPP) to its allylic isomer, dimethylallyl diphosphate (DMAPP). This Rickettsia bellii (strain RML369-C) protein is Isopentenyl-diphosphate delta-isomerase.